A 288-amino-acid chain; its full sequence is Transposase InsF for insertion sequence IS3fB (288 aa).

Residues Tyr124–Leu287 enclose the Integrase catalytic domain.

Belongs to the transposase IS3/IS150/IS904 family.

In terms of biological role, involved in the transposition of the insertion sequence IS3. This Escherichia coli (strain K12) protein is Transposase InsF for insertion sequence IS3fB (insF7).